The sequence spans 242 residues: Phosducin-like protein 2 (242 aa).

A Phosducin domain is found at 34–201; sequence VLRLQKEAMV…LEWKLAEVGA (168 aa). The thioredoxin fold stretch occupies residues 89-242; the sequence is FGELREISGN…SSNSDSEDTK (154 aa).

It belongs to the phosducin family. Interacts with the CCT chaperonin complex and actin.

Its subcellular location is the endoplasmic reticulum. In terms of biological role, essential for male fertility, spermiogenesis and acrosome formation. The protein is Phosducin-like protein 2 (PDCL2) of Bos taurus (Bovine).